We begin with the raw amino-acid sequence, 282 residues long: Putative hydrolase Bamb_4846 (282 aa).

Residues Glu124, Glu126, and Asp155 each coordinate Mg(2+).

Belongs to the FAH family. Requires Mg(2+) as cofactor.

The sequence is that of Putative hydrolase Bamb_4846 from Burkholderia ambifaria (strain ATCC BAA-244 / DSM 16087 / CCUG 44356 / LMG 19182 / AMMD) (Burkholderia cepacia (strain AMMD)).